The following is a 231-amino-acid chain: Probable caffeoyl-CoA O-methyltransferase 2 (231 aa).

Residues threonine 53, aspartate 75, 77–78, serine 83, aspartate 101, alanine 130, aspartate 152, aspartate 154, and tyrosine 161 each bind S-adenosyl-L-methionine; that span reads GV. Aspartate 152 is an a divalent metal cation binding site. A divalent metal cation is bound by residues aspartate 178 and asparagine 179.

Belongs to the class I-like SAM-binding methyltransferase superfamily. Cation-dependent O-methyltransferase family. CCoAMT subfamily.

The enzyme catalyses (E)-caffeoyl-CoA + S-adenosyl-L-methionine = (E)-feruloyl-CoA + S-adenosyl-L-homocysteine + H(+). In Dictyostelium discoideum (Social amoeba), this protein is Probable caffeoyl-CoA O-methyltransferase 2 (omt6).